The chain runs to 564 residues: Ribulokinase (564 aa).

The protein belongs to the ribulokinase family.

It catalyses the reaction D-ribulose + ATP = D-ribulose 5-phosphate + ADP + H(+). It carries out the reaction L-ribulose + ATP = L-ribulose 5-phosphate + ADP + H(+). Its pathway is carbohydrate degradation; L-arabinose degradation via L-ribulose; D-xylulose 5-phosphate from L-arabinose (bacterial route): step 2/3. This chain is Ribulokinase, found in Geobacillus thermodenitrificans (strain NG80-2).